The primary structure comprises 286 residues: Bifunctional protein FolD (286 aa).

NADP(+) is bound by residues 166–168 (GRS) and S191.

Belongs to the tetrahydrofolate dehydrogenase/cyclohydrolase family. In terms of assembly, homodimer.

It carries out the reaction (6R)-5,10-methylene-5,6,7,8-tetrahydrofolate + NADP(+) = (6R)-5,10-methenyltetrahydrofolate + NADPH. The catalysed reaction is (6R)-5,10-methenyltetrahydrofolate + H2O = (6R)-10-formyltetrahydrofolate + H(+). The protein operates within one-carbon metabolism; tetrahydrofolate interconversion. In terms of biological role, catalyzes the oxidation of 5,10-methylenetetrahydrofolate to 5,10-methenyltetrahydrofolate and then the hydrolysis of 5,10-methenyltetrahydrofolate to 10-formyltetrahydrofolate. In Lactiplantibacillus plantarum (strain ATCC BAA-793 / NCIMB 8826 / WCFS1) (Lactobacillus plantarum), this protein is Bifunctional protein FolD.